A 110-amino-acid polypeptide reads, in one-letter code: UPF0122 protein BCA_3946 (110 aa).

It belongs to the UPF0122 family.

In terms of biological role, might take part in the signal recognition particle (SRP) pathway. This is inferred from the conservation of its genetic proximity to ftsY/ffh. May be a regulatory protein. This Bacillus cereus (strain 03BB102) protein is UPF0122 protein BCA_3946.